A 167-amino-acid chain; its full sequence is Ubiquitin-conjugating enzyme E2 15 (167 aa).

Residues 5–165 enclose the UBC core domain; it reads ASEQLLRKQL…VRRLVRRSIE (161 aa). The Glycyl thioester intermediate role is filled by Cys-90.

This sequence belongs to the ubiquitin-conjugating enzyme family.

The catalysed reaction is S-ubiquitinyl-[E1 ubiquitin-activating enzyme]-L-cysteine + [E2 ubiquitin-conjugating enzyme]-L-cysteine = [E1 ubiquitin-activating enzyme]-L-cysteine + S-ubiquitinyl-[E2 ubiquitin-conjugating enzyme]-L-cysteine.. It functions in the pathway protein modification; protein ubiquitination. Catalyzes the covalent attachment of ubiquitin to other proteins. Has a role in the formation of chromatin structures that influence the localization of transcriptional silencing factors. This chain is Ubiquitin-conjugating enzyme E2 15 (ubc15), found in Schizosaccharomyces pombe (strain 972 / ATCC 24843) (Fission yeast).